The primary structure comprises 523 residues: Spastin (523 aa).

Topologically, residues 1–41 (MLDKLSKHKTMFYERVKEIDQILFSQQQAKQTQLDNLSNNN) are cytoplasmic. Residues 42-58 (ASGGFFSGFMKMFSPLS) constitute an intramembrane region (helical). Low complexity-rich tracts occupy residues 57–71 (LSTPPNSSSNNNSNT), 171–184 (QQPPQQSSQQQQQP), and 193–210 (TALRNTTSATSSTTTANN). Disordered stretches follow at residues 57–77 (LSTPPNSSSNNNSNTQQAISQ) and 129–218 (GISS…LDQI). Topologically, residues 59 to 523 (TPPNSSSNNN…ESYGTFAKGI (465 aa)) are cytoplasmic.

It belongs to the AAA ATPase family. Spastin subfamily. As to quaternary structure, homohexamer. The homohexamer is stabilized by ATP-binding. The homohexamer may adopt a ring conformation through which microtubules pass prior to being severed.

The protein resides in the membrane. It catalyses the reaction n ATP + n H2O + a microtubule = n ADP + n phosphate + (n+1) alpha/beta tubulin heterodimers.. Functionally, ATP-dependent microtubule severing protein. Stimulates microtubule minus-end depolymerization and poleward microtubule flux in the mitotic spindle. In Naegleria gruberi (Amoeba), this protein is Spastin.